A 176-amino-acid polypeptide reads, in one-letter code: Large ribosomal subunit protein uL6 (176 aa).

A compositionally biased stretch (basic and acidic residues) spans 151–170 (RPPEPYKGKGVRYADEQVRR). The interval 151–176 (RPPEPYKGKGVRYADEQVRRKEAKKK) is disordered.

This sequence belongs to the universal ribosomal protein uL6 family. As to quaternary structure, part of the 50S ribosomal subunit.

Functionally, this protein binds to the 23S rRNA, and is important in its secondary structure. It is located near the subunit interface in the base of the L7/L12 stalk, and near the tRNA binding site of the peptidyltransferase center. In Shewanella halifaxensis (strain HAW-EB4), this protein is Large ribosomal subunit protein uL6.